The chain runs to 300 residues: Cholesterol 25-hydroxylase-like protein (300 aa).

Asn9 is a glycosylation site (N-linked (GlcNAc...) asparagine). Transmembrane regions (helical) follow at residues Leu43–Ile63, Leu95–Val115, and Met130–Asn152. The Fatty acid hydroxylase domain occupies Ala135–Gly266. Positions Phe148–Asn152 match the Histidine box-1 motif. Positions His163 to His167 match the Histidine box-2 motif. Residues Leu180–Pro200 traverse the membrane as a helical segment. Positions Ala242–Leu248 match the Histidine box-3 motif.

This sequence belongs to the sterol desaturase family. Requires Fe cation as cofactor.

Its subcellular location is the membrane. Functionally, probable sterol desaturase. The polypeptide is Cholesterol 25-hydroxylase-like protein (Caenorhabditis briggsae).